Reading from the N-terminus, the 142-residue chain is Small ribosomal subunit protein bS16 (142 aa).

The interval 101–142 is disordered; sequence RPSFDALGGDDAGKGEAITQKKKAEKKDEAAAESSSSESTEA. The segment covering 132-142 has biased composition (low complexity); it reads AESSSSESTEA.

It belongs to the bacterial ribosomal protein bS16 family.

The polypeptide is Small ribosomal subunit protein bS16 (Streptomyces avermitilis (strain ATCC 31267 / DSM 46492 / JCM 5070 / NBRC 14893 / NCIMB 12804 / NRRL 8165 / MA-4680)).